A 441-amino-acid chain; its full sequence is Xylose isomerase (441 aa).

Catalysis depends on residues H100 and D103. Residues E231, E267, H270, D295, D306, D308, and D338 each coordinate Mg(2+).

The protein belongs to the xylose isomerase family. In terms of assembly, homotetramer. It depends on Mg(2+) as a cofactor.

The protein resides in the cytoplasm. It catalyses the reaction alpha-D-xylose = alpha-D-xylulofuranose. This Paraburkholderia phymatum (strain DSM 17167 / CIP 108236 / LMG 21445 / STM815) (Burkholderia phymatum) protein is Xylose isomerase.